Here is a 417-residue protein sequence, read N- to C-terminus: Serine hydroxymethyltransferase (417 aa).

(6S)-5,6,7,8-tetrahydrofolate-binding positions include leucine 121 and 125–127; that span reads GHL. Lysine 229 is modified (N6-(pyridoxal phosphate)lysine). 355–357 lines the (6S)-5,6,7,8-tetrahydrofolate pocket; the sequence is SPF.

Belongs to the SHMT family. As to quaternary structure, homodimer. It depends on pyridoxal 5'-phosphate as a cofactor.

It localises to the cytoplasm. It carries out the reaction (6R)-5,10-methylene-5,6,7,8-tetrahydrofolate + glycine + H2O = (6S)-5,6,7,8-tetrahydrofolate + L-serine. Its pathway is one-carbon metabolism; tetrahydrofolate interconversion. It functions in the pathway amino-acid biosynthesis; glycine biosynthesis; glycine from L-serine: step 1/1. Catalyzes the reversible interconversion of serine and glycine with tetrahydrofolate (THF) serving as the one-carbon carrier. This reaction serves as the major source of one-carbon groups required for the biosynthesis of purines, thymidylate, methionine, and other important biomolecules. Also exhibits THF-independent aldolase activity toward beta-hydroxyamino acids, producing glycine and aldehydes, via a retro-aldol mechanism. In Salmonella arizonae (strain ATCC BAA-731 / CDC346-86 / RSK2980), this protein is Serine hydroxymethyltransferase.